Here is a 94-residue protein sequence, read N- to C-terminus: Small ribosomal subunit protein bS18 (94 aa).

This sequence belongs to the bacterial ribosomal protein bS18 family. Part of the 30S ribosomal subunit. Forms a tight heterodimer with protein bS6.

In terms of biological role, binds as a heterodimer with protein bS6 to the central domain of the 16S rRNA, where it helps stabilize the platform of the 30S subunit. This Albidiferax ferrireducens (strain ATCC BAA-621 / DSM 15236 / T118) (Rhodoferax ferrireducens) protein is Small ribosomal subunit protein bS18.